Here is a 516-residue protein sequence, read N- to C-terminus: 2,3-bisphosphoglycerate-independent phosphoglycerate mutase (516 aa).

Positions 15 and 65 each coordinate Mn(2+). The active-site Phosphoserine intermediate is serine 65. Substrate contacts are provided by residues histidine 126, 156–157 (RD), arginine 188, arginine 194, 263–266 (RADR), and lysine 336. Positions 403, 407, 444, 445, and 463 each coordinate Mn(2+).

Belongs to the BPG-independent phosphoglycerate mutase family. As to quaternary structure, monomer. The cofactor is Mn(2+).

The catalysed reaction is (2R)-2-phosphoglycerate = (2R)-3-phosphoglycerate. Its pathway is carbohydrate degradation; glycolysis; pyruvate from D-glyceraldehyde 3-phosphate: step 3/5. Its function is as follows. Catalyzes the interconversion of 2-phosphoglycerate and 3-phosphoglycerate. The chain is 2,3-bisphosphoglycerate-independent phosphoglycerate mutase from Francisella tularensis subsp. holarctica (strain OSU18).